Reading from the N-terminus, the 634-residue chain is uncharacterized protein (634 aa).

The signal sequence occupies residues Met-1–Ala-40. Residues Arg-41 to Gly-589 lie on the Extracellular side of the membrane. Residue Asn-363 is glycosylated (N-linked (GlcNAc...) asparagine). The chain crosses the membrane as a helical span at residues Leu-590–Phe-610. At Lys-611–Val-634 the chain is on the cytoplasmic side.

It localises to the membrane. This is an uncharacterized protein from Bos taurus (Bovine).